A 124-amino-acid polypeptide reads, in one-letter code: Putative ankyrin repeat protein RF_1087 (124 aa).

ANK repeat units follow at residues 17–46 (NDQK…NPNI), 50–79 (NGET…IIDS), and 83–112 (FERT…TIGN).

This is Putative ankyrin repeat protein RF_1087 from Rickettsia felis (strain ATCC VR-1525 / URRWXCal2) (Rickettsia azadi).